Here is a 249-residue protein sequence, read N- to C-terminus: MAGHSQFKNIMHRKGRQDAVKSKMFSKLAREITVAAKAGLPDPAMNPRLRLAVQNARAQSMPKDNIERAIKKAQGNDAETYEEIRYEGYAPGGVAVIVEALTDNRNRTASNVRAAFTKAGGALGETGSVSFMFDRVGEIVYPASAGDADKVMEAAIEAGAEDVQSDENGHVIICAFEDIGEVTSALEEALGEAESVKTVWRPQTSTPVDEERAQSILKLIAVLEDDDDVQNVYANFEVDDATMAKLSAA.

This sequence belongs to the TACO1 family.

It localises to the cytoplasm. The polypeptide is Probable transcriptional regulatory protein Meso_3192 (Chelativorans sp. (strain BNC1)).